We begin with the raw amino-acid sequence, 529 residues long: Autoinducer-2 kinase (529 aa).

The protein belongs to the FGGY kinase family.

The protein localises to the cytoplasm. It carries out the reaction (S)-4,5-dihydroxypentane-2,3-dione + ATP = (2S)-2-hydroxy-3,4-dioxopentyl phosphate + ADP + H(+). Catalyzes the phosphorylation of autoinducer-2 (AI-2) to phospho-AI-2, which subsequently inactivates the transcriptional regulator LsrR and leads to the transcription of the lsr operon. Phosphorylates the ring-open form of (S)-4,5-dihydroxypentane-2,3-dione (DPD), which is the precursor to all AI-2 signaling molecules, at the C5 position. This chain is Autoinducer-2 kinase, found in Yersinia enterocolitica serotype O:8 / biotype 1B (strain NCTC 13174 / 8081).